A 628-amino-acid chain; its full sequence is tRNA uridine 5-carboxymethylaminomethyl modification enzyme MnmG (628 aa).

FAD contacts are provided by residues 14–19 (GAGHAG), Val126, and Ser181. 273 to 287 (GPRYCPSIEDKVVRF) contacts NAD(+). Residue Gln370 participates in FAD binding.

It belongs to the MnmG family. In terms of assembly, homodimer. Heterotetramer of two MnmE and two MnmG subunits. The cofactor is FAD.

Its subcellular location is the cytoplasm. In terms of biological role, NAD-binding protein involved in the addition of a carboxymethylaminomethyl (cmnm) group at the wobble position (U34) of certain tRNAs, forming tRNA-cmnm(5)s(2)U34. In Pelobacter propionicus (strain DSM 2379 / NBRC 103807 / OttBd1), this protein is tRNA uridine 5-carboxymethylaminomethyl modification enzyme MnmG.